A 548-amino-acid chain; its full sequence is CTP synthase (548 aa).

An amidoligase domain region spans residues 1-267 (MKTKFIFITG…DQKIAIMLQL (267 aa)). Residue serine 14 coordinates CTP. Serine 14 is a binding site for UTP. Residues 15-20 (SLGKGL) and aspartate 72 contribute to the ATP site. 2 residues coordinate Mg(2+): aspartate 72 and glutamate 141. CTP-binding positions include 148-150 (DIE), 188-193 (KTKPTQ), and lysine 224. UTP is bound by residues 188–193 (KTKPTQ) and lysine 224. Residues 292–545 (TIGIVGKYVD…IKAAGKQAVK (254 aa)) enclose the Glutamine amidotransferase type-1 domain. Glycine 354 serves as a coordination point for L-glutamine. The active-site Nucleophile; for glutamine hydrolysis is the cysteine 381. L-glutamine contacts are provided by residues 382-385 (LGMQ), glutamate 405, and arginine 473. Active-site residues include histidine 518 and glutamate 520.

The protein belongs to the CTP synthase family. In terms of assembly, homotetramer.

It catalyses the reaction UTP + L-glutamine + ATP + H2O = CTP + L-glutamate + ADP + phosphate + 2 H(+). It carries out the reaction L-glutamine + H2O = L-glutamate + NH4(+). The catalysed reaction is UTP + NH4(+) + ATP = CTP + ADP + phosphate + 2 H(+). Its pathway is pyrimidine metabolism; CTP biosynthesis via de novo pathway; CTP from UDP: step 2/2. Allosterically activated by GTP, when glutamine is the substrate; GTP has no effect on the reaction when ammonia is the substrate. The allosteric effector GTP functions by stabilizing the protein conformation that binds the tetrahedral intermediate(s) formed during glutamine hydrolysis. Inhibited by the product CTP, via allosteric rather than competitive inhibition. Its function is as follows. Catalyzes the ATP-dependent amination of UTP to CTP with either L-glutamine or ammonia as the source of nitrogen. Regulates intracellular CTP levels through interactions with the four ribonucleotide triphosphates. This is CTP synthase from Oleidesulfovibrio alaskensis (strain ATCC BAA-1058 / DSM 17464 / G20) (Desulfovibrio alaskensis).